A 1049-amino-acid polypeptide reads, in one-letter code: Desmoglein-1 (1049 aa).

A signal peptide spans 1–23 (MDWSFFRVVAMLFIFLVVVEVNS). Positions 24 to 49 (EFRIQVRDYNTKNGTIKWHSIRRQKR) are excised as a propeptide. 3 N-linked (GlcNAc...) asparagine glycosylation sites follow: N36, N110, and N180. 4 consecutive Cadherin domains span residues 50–158 (EWIK…PVFS), 159–270 (MATF…PYME), 271–385 (QSSY…GPVF), and 386–497 (RPGS…TEPN). Over 50-548 (EWIKFAAACR…LLSDNVHFGP (499 aa)) the chain is Extracellular. Positions 485–534 (SFGNDDRTNTEPNTKITTNTGRQESTSSTNYDTSTTSTDSSQVYSSEPGN) are disordered. Over residues 494–508 (TEPNTKITTNTGRQE) the composition is skewed to polar residues. Over residues 509 to 530 (STSSTNYDTSTTSTDSSQVYSS) the composition is skewed to low complexity. The helical transmembrane segment at 549–569 (AGIGLLIMGFLVLGLVPFLMI) threads the bilayer. The Cytoplasmic segment spans residues 570 to 1049 (CCDCGGAPRS…TKYSTVQYSK (480 aa)). Residue S579 is modified to Phosphoserine. Desmoglein repeat repeat units lie at residues 813 to 839 (TYPS…TVTE), 840 to 869 (SYTT…ERVV), 870 to 899 (GPIS…ERVI), 900 to 927 (APSS…ERVI), and 928 to 956 (QPTS…ERVV). Residues 1014 to 1035 (HMRSSSDHHFNQTIGSASPSTA) are disordered. Residues 1024–1035 (NQTIGSASPSTA) are compositionally biased toward polar residues.

In terms of assembly, binds to JUP/plakoglobin. Interacts with PKP2. Interacts with DSC3; there is evidence to suggest that the interaction promotes cell-cell adhesion of keratinocytes. (Microbial infection) Interacts with Staphylococcus aureus protein SdrD; this interaction increases S.aureus adherence to keratinocytes. As to expression, expressed in all suprabasal layers of the epidermis, with the highest expression seen in the granular layer (at protein level).

It is found in the cell membrane. The protein resides in the cell junction. Its subcellular location is the desmosome. The protein localises to the cytoplasm. It localises to the nucleus. Functionally, component of intercellular desmosome junctions. Involved in the interaction of plaque proteins and intermediate filaments mediating cell-cell adhesion. In Homo sapiens (Human), this protein is Desmoglein-1 (DSG1).